A 363-amino-acid polypeptide reads, in one-letter code: S-adenosylmethionine:tRNA ribosyltransferase-isomerase (363 aa).

This sequence belongs to the QueA family. In terms of assembly, monomer.

It is found in the cytoplasm. The enzyme catalyses 7-aminomethyl-7-carbaguanosine(34) in tRNA + S-adenosyl-L-methionine = epoxyqueuosine(34) in tRNA + adenine + L-methionine + 2 H(+). It participates in tRNA modification; tRNA-queuosine biosynthesis. Its function is as follows. Transfers and isomerizes the ribose moiety from AdoMet to the 7-aminomethyl group of 7-deazaguanine (preQ1-tRNA) to give epoxyqueuosine (oQ-tRNA). The sequence is that of S-adenosylmethionine:tRNA ribosyltransferase-isomerase from Brucella abortus (strain S19).